Reading from the N-terminus, the 126-residue chain is Glycine cleavage system H protein (126 aa).

Positions 22 to 104 (VAYVGITDYA…YGEGWLIKMK (83 aa)) constitute a Lipoyl-binding domain. N6-lipoyllysine is present on lysine 63.

It belongs to the GcvH family. The glycine cleavage system is composed of four proteins: P, T, L and H. It depends on (R)-lipoate as a cofactor.

Functionally, the glycine cleavage system catalyzes the degradation of glycine. The H protein shuttles the methylamine group of glycine from the P protein to the T protein. The sequence is that of Glycine cleavage system H protein from Bacteroides fragilis (strain YCH46).